Reading from the N-terminus, the 102-residue chain is Acid shock protein (102 aa).

The first 21 residues, 1–21 (MKKVLALVVAAAMGLSSAAFA), serve as a signal peptide directing secretion. The span at 22–41 (AETATTPAPTATTTKAAPAK) shows a compositional bias: low complexity. A propeptide spanning residues 22-58 (AETATTPAPTATTTKAAPAKTTHHKKQHKAAPAQKAQ) is cleaved from the precursor. The disordered stretch occupies residues 22-102 (AETATTPAPT…PAKPAAQPAA (81 aa)). Over residues 80–90 (AAKKHAKKHSH) the composition is skewed to basic residues. A compositionally biased stretch (low complexity) spans 91–102 (QQPAKPAAQPAA).

This sequence belongs to the Asr family. Proteolytic processing gives rise to the active protein.

It is found in the periplasm. Its function is as follows. Required for growth and/or survival at acidic conditions. In Escherichia coli O45:K1 (strain S88 / ExPEC), this protein is Acid shock protein.